A 224-amino-acid chain; its full sequence is Prophage repressor CohE (224 aa).

This is Prophage repressor CohE (cohE) from Escherichia coli (strain K12).